We begin with the raw amino-acid sequence, 369 residues long: Probable L-tyrosine/L-aspartate decarboxylase (369 aa).

An N6-(pyridoxal phosphate)lysine modification is found at lysine 224.

It belongs to the group II decarboxylase family. MfnA subfamily. Pyridoxal 5'-phosphate serves as cofactor.

It catalyses the reaction L-tyrosine + H(+) = tyramine + CO2. The enzyme catalyses L-aspartate + H(+) = beta-alanine + CO2. The protein operates within cofactor biosynthesis; methanofuran biosynthesis. It functions in the pathway cofactor biosynthesis; coenzyme A biosynthesis. In terms of biological role, catalyzes the decarboxylation of L-tyrosine to produce tyramine for methanofuran biosynthesis. Can also catalyze the decarboxylation of L-aspartate to produce beta-alanine for coenzyme A (CoA) biosynthesis. This chain is Probable L-tyrosine/L-aspartate decarboxylase, found in Methanospirillum hungatei JF-1 (strain ATCC 27890 / DSM 864 / NBRC 100397 / JF-1).